A 426-amino-acid chain; its full sequence is Serine hydroxymethyltransferase (426 aa).

Residues L121 and 125–127 (GHL) contribute to the (6S)-5,6,7,8-tetrahydrofolate site. K230 bears the N6-(pyridoxal phosphate)lysine mark. Position 354–356 (354–356 (SPF)) interacts with (6S)-5,6,7,8-tetrahydrofolate.

It belongs to the SHMT family. Homodimer. Pyridoxal 5'-phosphate is required as a cofactor.

It localises to the cytoplasm. It carries out the reaction (6R)-5,10-methylene-5,6,7,8-tetrahydrofolate + glycine + H2O = (6S)-5,6,7,8-tetrahydrofolate + L-serine. The protein operates within one-carbon metabolism; tetrahydrofolate interconversion. Its pathway is amino-acid biosynthesis; glycine biosynthesis; glycine from L-serine: step 1/1. Functionally, catalyzes the reversible interconversion of serine and glycine with tetrahydrofolate (THF) serving as the one-carbon carrier. This reaction serves as the major source of one-carbon groups required for the biosynthesis of purines, thymidylate, methionine, and other important biomolecules. Also exhibits THF-independent aldolase activity toward beta-hydroxyamino acids, producing glycine and aldehydes, via a retro-aldol mechanism. The sequence is that of Serine hydroxymethyltransferase from Gloeobacter violaceus (strain ATCC 29082 / PCC 7421).